Consider the following 1359-residue polypeptide: Tripeptidyl-peptidase 2 (1359 aa).

A disordered region spans residues 45–81 (AASTTTRGGPSPSAGVAPRAMPSSSSSPPSAAEGTTA). A compositionally biased stretch (low complexity) spans 64–81 (AMPSSSSSPPSAAEGTTA). The 499-residue stretch at 102–600 (EIGVDRFLAA…HGLLQVDRAF (499 aa)) folds into the Peptidase S8 domain. Catalysis depends on charge relay system residues Asp126, His353, and Ser539.

Belongs to the peptidase S8 family.

It carries out the reaction Release of an N-terminal tripeptide from a polypeptide.. Functionally, serine protease that may function in the proteasome pathway. The protein is Tripeptidyl-peptidase 2 (TPP2) of Oryza sativa subsp. japonica (Rice).